The chain runs to 525 residues: Peptide chain release factor 3 (525 aa).

The 269-residue stretch at 11 to 279 folds into the tr-type G domain; sequence ERRRTFAIIS…AFVDMAPAPE (269 aa). GTP contacts are provided by residues 20 to 27, 88 to 92, and 142 to 145; these read SHPDAGKT, DTPGH, and NKLD.

The protein belongs to the TRAFAC class translation factor GTPase superfamily. Classic translation factor GTPase family. PrfC subfamily.

The protein resides in the cytoplasm. Increases the formation of ribosomal termination complexes and stimulates activities of RF-1 and RF-2. It binds guanine nucleotides and has strong preference for UGA stop codons. It may interact directly with the ribosome. The stimulation of RF-1 and RF-2 is significantly reduced by GTP and GDP, but not by GMP. The sequence is that of Peptide chain release factor 3 from Latilactobacillus sakei subsp. sakei (strain 23K) (Lactobacillus sakei subsp. sakei).